A 276-amino-acid chain; its full sequence is NH(3)-dependent NAD(+) synthetase (276 aa).

ATP is bound at residue 43–50 (GISGGVDS). Residue aspartate 49 coordinates Mg(2+). Arginine 146 serves as a coordination point for deamido-NAD(+). An ATP-binding site is contributed by threonine 166. Glutamate 171 serves as a coordination point for Mg(2+). Deamido-NAD(+) contacts are provided by lysine 179 and aspartate 186. Lysine 195 and threonine 217 together coordinate ATP. Position 266-267 (266-267 (HK)) interacts with deamido-NAD(+).

The protein belongs to the NAD synthetase family. In terms of assembly, homodimer.

It carries out the reaction deamido-NAD(+) + NH4(+) + ATP = AMP + diphosphate + NAD(+) + H(+). It functions in the pathway cofactor biosynthesis; NAD(+) biosynthesis; NAD(+) from deamido-NAD(+) (ammonia route): step 1/1. Its function is as follows. Catalyzes the ATP-dependent amidation of deamido-NAD to form NAD. Uses ammonia as a nitrogen source. This chain is NH(3)-dependent NAD(+) synthetase, found in Shewanella oneidensis (strain ATCC 700550 / JCM 31522 / CIP 106686 / LMG 19005 / NCIMB 14063 / MR-1).